Consider the following 234-residue polypeptide: NAD-dependent protein deacylase (234 aa).

A Deacetylase sirtuin-type domain is found at 1 to 234; the sequence is MKNLVVLTGA…ELKQLLIPAP (234 aa). 9–28 contacts NAD(+); that stretch reads GAGMSAESGISTFRDAGGLW. Residues Tyr53 and Arg56 each contribute to the substrate site. An NAD(+)-binding site is contributed by 86–89; sequence QNVD. His104 functions as the Proton acceptor in the catalytic mechanism. 175–177 contacts NAD(+); sequence GTS.

It belongs to the sirtuin family. Class III subfamily.

Its subcellular location is the cytoplasm. The enzyme catalyses N(6)-acetyl-L-lysyl-[protein] + NAD(+) + H2O = 2''-O-acetyl-ADP-D-ribose + nicotinamide + L-lysyl-[protein]. The catalysed reaction is N(6)-succinyl-L-lysyl-[protein] + NAD(+) + H2O = 2''-O-succinyl-ADP-D-ribose + nicotinamide + L-lysyl-[protein]. NAD-dependent lysine deacetylase and desuccinylase that specifically removes acetyl and succinyl groups on target proteins. Modulates the activities of several proteins which are inactive in their acylated form. The polypeptide is NAD-dependent protein deacylase (Bacteroides thetaiotaomicron (strain ATCC 29148 / DSM 2079 / JCM 5827 / CCUG 10774 / NCTC 10582 / VPI-5482 / E50)).